The following is a 213-amino-acid chain: Kynurenine formamidase (213 aa).

W20 contacts substrate. Residues H50, H54, and D56 each contribute to the Zn(2+) site. H60 functions as the Proton donor/acceptor in the catalytic mechanism. Zn(2+)-binding residues include H161 and E173.

Belongs to the Cyclase 1 superfamily. KynB family. Homodimer. Requires Zn(2+) as cofactor.

It carries out the reaction N-formyl-L-kynurenine + H2O = L-kynurenine + formate + H(+). It participates in amino-acid degradation; L-tryptophan degradation via kynurenine pathway; L-kynurenine from L-tryptophan: step 2/2. In terms of biological role, catalyzes the hydrolysis of N-formyl-L-kynurenine to L-kynurenine, the second step in the kynurenine pathway of tryptophan degradation. The chain is Kynurenine formamidase from Pseudomonas aeruginosa (strain ATCC 15692 / DSM 22644 / CIP 104116 / JCM 14847 / LMG 12228 / 1C / PRS 101 / PAO1).